The primary structure comprises 394 residues: Elongation factor Tu 1 (394 aa).

The 195-residue stretch at 10–204 (KPHVNVGTIG…YLDSYIPEPE (195 aa)) folds into the tr-type G domain. Residues 19 to 26 (GHVDHGKT) are G1. 19 to 26 (GHVDHGKT) contacts GTP. T26 is a binding site for Mg(2+). The segment at 60–64 (GITIN) is G2. Residues 81-84 (DCPG) are G3. GTP-binding positions include 81-85 (DCPGH) and 136-139 (NKCD). The segment at 136–139 (NKCD) is G4. Positions 174–176 (SAL) are G5.

This sequence belongs to the TRAFAC class translation factor GTPase superfamily. Classic translation factor GTPase family. EF-Tu/EF-1A subfamily. In terms of assembly, monomer.

The protein resides in the cytoplasm. The catalysed reaction is GTP + H2O = GDP + phosphate + H(+). Functionally, GTP hydrolase that promotes the GTP-dependent binding of aminoacyl-tRNA to the A-site of ribosomes during protein biosynthesis. The chain is Elongation factor Tu 1 from Yersinia enterocolitica serotype O:8 / biotype 1B (strain NCTC 13174 / 8081).